The chain runs to 405 residues: Phosphoglycerate kinase (405 aa).

Residues 24–26 (DFN), arginine 40, 63–66 (HLGR), arginine 122, and arginine 162 contribute to the substrate site. ATP-binding positions include lysine 212, glutamate 331, and 361 to 364 (GGDS).

It belongs to the phosphoglycerate kinase family. Monomer.

It localises to the cytoplasm. The catalysed reaction is (2R)-3-phosphoglycerate + ATP = (2R)-3-phospho-glyceroyl phosphate + ADP. It participates in carbohydrate degradation; glycolysis; pyruvate from D-glyceraldehyde 3-phosphate: step 2/5. This chain is Phosphoglycerate kinase, found in Corynebacterium aurimucosum (strain ATCC 700975 / DSM 44827 / CIP 107346 / CN-1) (Corynebacterium nigricans).